A 397-amino-acid chain; its full sequence is Cephalotocin receptor 1 (397 aa).

Topologically, residues 1 to 48 are extracellular; that stretch reads MRYITTHPNEISTQIWNNFSSTEIWSNFSAAKNETQPIRRNQDLANAE. Residues Asn-18, Asn-27, and Asn-33 are each glycosylated (N-linked (GlcNAc...) asparagine). A helical transmembrane segment spans residues 49–69; that stretch reads VITLAVVIIITVIGNSIVLIT. Residues 70 to 91 lie on the Cytoplasmic side of the membrane; sequence LFQRRKKLTRMHLFILHLSVTD. Residues 92–112 form a helical membrane-spanning segment; it reads LFVAFFNNLPQMIWDITFLFL. The Extracellular portion of the chain corresponds to 113-120; it reads GTDLLCRL. Cys-118 and Cys-194 are joined by a disulfide. A helical membrane pass occupies residues 121-141; the sequence is VTYLQSVAMYASSYVLVATAI. Topologically, residues 142–162 are cytoplasmic; that stretch reads DRYFAICHPLSSHKWTTARVH. The chain crosses the membrane as a helical span at residues 163-183; that stretch reads VMVFIAWMLSFLFSTPQLFIW. The Extracellular portion of the chain corresponds to 184–205; the sequence is SMQFSNIGLTCQATFDPEWTLK. The helical transmembrane segment at 206 to 226 threads the bilayer; that stretch reads FYITWLTVAIWILPTIALTLF. Over 227–293 the chain is Cytoplasmic; that stretch reads YGMMCFAVWK…RGISRAKVRS (67 aa). A helical membrane pass occupies residues 294 to 314; the sequence is VALTLSVVACCFICWSPFFVC. Residues 315 to 331 are Extracellular-facing; the sequence is QMWAAWDENAPYSGAIY. The chain crosses the membrane as a helical span at residues 332–352; it reads TILLLLSSLNSCTNPWIYMIF. The Cytoplasmic segment spans residues 353-397; that stretch reads SVFQHRAKTSRFVNDEETTSVTVLSSRNDIRLMSMKKKLEQTARN.

It belongs to the G-protein coupled receptor 1 family. Vasopressin/oxytocin receptor subfamily. In terms of tissue distribution, present in brain, buccal ganglion, gastric ganglion, olfactory lube, peduncle lobe, optical lobe, pancreas, the oviduct and the ovary.

It localises to the cell membrane. Acts as a receptor for cephalotocin. The chain is Cephalotocin receptor 1 from Octopus vulgaris (Common octopus).